The following is a 336-amino-acid chain: Octanoyltransferase (336 aa).

A compositionally biased stretch (polar residues) spans 1-16 (MPKSALMSSSFQTSVS). Disordered stretches follow at residues 1 to 22 (MPKSALMSSSFQTSVSPRPLPV) and 48 to 88 (QGKG…GGGR). A unknown region spans residues 1–92 (MPKSALMSSS…AAGGGRTIRD (92 aa)). A lipB domain region spans residues 93-336 (VKEAAFDVLD…GQEALSVASP (244 aa)). The region spanning 124–318 (VGGRPTLLLV…AFALTFADYD (195 aa)) is the BPL/LPL catalytic domain. Substrate contacts are provided by residues 170–177 (RGGDVTYH), 244–246 (SIG), and 257–259 (GIG). Cys275 serves as the catalytic Acyl-thioester intermediate.

In the C-terminal section; belongs to the LipB family.

The protein resides in the cytoplasm. It carries out the reaction octanoyl-[ACP] + L-lysyl-[protein] = N(6)-octanoyl-L-lysyl-[protein] + holo-[ACP] + H(+). The protein operates within protein modification; protein lipoylation via endogenous pathway; protein N(6)-(lipoyl)lysine from octanoyl-[acyl-carrier-protein]: step 1/2. Catalyzes the transfer of endogenously produced octanoic acid from octanoyl-acyl-carrier-protein onto the lipoyl domains of lipoate-dependent enzymes. Lipoyl-ACP can also act as a substrate although octanoyl-ACP is likely to be the physiological substrate. This chain is Octanoyltransferase, found in Deinococcus radiodurans (strain ATCC 13939 / DSM 20539 / JCM 16871 / CCUG 27074 / LMG 4051 / NBRC 15346 / NCIMB 9279 / VKM B-1422 / R1).